We begin with the raw amino-acid sequence, 269 residues long: Propanediol uptake facilitator PduF (269 aa).

2 helical membrane passes run Ile10–Leu30 and Ile42–Gly62. An NPA 1 motif is present at residues Asn66–Ala68. 3 consecutive transmembrane segments (helical) span residues Ile69 to Val89, Val143 to Ala163, and Leu179 to Ala199. The NPA 2 motif lies at Asn201–Ala203. A helical membrane pass occupies residues Ile228–Ile248.

Belongs to the MIP/aquaporin (TC 1.A.8) family.

Its subcellular location is the cell inner membrane. Its function is as follows. Probably facilitates diffusion of 1,2-propanediol (1,2-PD) into the cell. The protein is Propanediol uptake facilitator PduF of Citrobacter freundii.